A 380-amino-acid chain; its full sequence is MAPNIRKSHPLLKMINNSLIDLPTPPNISAWWNFGSLLAMCLITQILTGLLLAMHYTADTSLAFSSVAHTCRNVQYGWLIRNLHANGASFFFICIFLHIGRGLYYGSYLYKETWNTGVILLLTLMATAFVGYVLPWGQMSFWGATVITNLFSAVPYIGQTLVEWAWGGFSVDNPTLTRFFALHFLLPFLIAGITIIHLTFLHESGSNNPLGISSDSDKIPFHPYYSIKDILGLTLMLTPFLTLALFSPNFLGDPENFTPANPLVTPPHIKPEWYFLFAYAILRSIPNKLGGVLALAASVLILLLIPFLHKSKQRTMTFRPLSQTLFWLLVANLLILTWIGSQPVEHPFIIIGQMASLSYFTILLILFPMIGMLENKMLNH.

4 consecutive transmembrane segments (helical) span residues 34–54 (FGSLLAMCLITQILTGLLLAM), 78–99 (WLIRNLHANGASFFFICIFLHI), 114–134 (WNTGVILLLTLMATAFVGYVL), and 179–199 (FFALHFLLPFLIAGITIIHLT). 2 residues coordinate heme b: His84 and His98. His183 and His197 together coordinate heme b. An a ubiquinone-binding site is contributed by His202. A run of 4 helical transmembrane segments spans residues 227 to 247 (IKDILGLTLMLTPFLTLALFS), 289 to 309 (LGGVLALAASVLILLLIPFLH), 321 to 341 (LSQTLFWLLVANLLILTWIGS), and 348 to 368 (FIIIGQMASLSYFTILLILFP).

Belongs to the cytochrome b family. As to quaternary structure, the cytochrome bc1 complex contains 11 subunits: 3 respiratory subunits (MT-CYB, CYC1 and UQCRFS1), 2 core proteins (UQCRC1 and UQCRC2) and 6 low-molecular weight proteins (UQCRH/QCR6, UQCRB/QCR7, UQCRQ/QCR8, UQCR10/QCR9, UQCR11/QCR10 and a cleavage product of UQCRFS1). This cytochrome bc1 complex then forms a dimer. Heme b is required as a cofactor.

Its subcellular location is the mitochondrion inner membrane. Component of the ubiquinol-cytochrome c reductase complex (complex III or cytochrome b-c1 complex) that is part of the mitochondrial respiratory chain. The b-c1 complex mediates electron transfer from ubiquinol to cytochrome c. Contributes to the generation of a proton gradient across the mitochondrial membrane that is then used for ATP synthesis. The chain is Cytochrome b (MT-CYB) from Coturnix japonica (Japanese quail).